The following is an 88-amino-acid chain: Putative membrane protein insertion efficiency factor (88 aa).

The protein belongs to the UPF0161 family.

Its subcellular location is the cell inner membrane. Its function is as follows. Could be involved in insertion of integral membrane proteins into the membrane. This Coxiella burnetii (strain Dugway 5J108-111) protein is Putative membrane protein insertion efficiency factor.